Here is a 376-residue protein sequence, read N- to C-terminus: Serpin B6 (376 aa).

Met-1 is subject to N-acetylmethionine. Ser-151 bears the Phosphoserine mark. N6-acetyllysine is present on Lys-195.

Belongs to the serpin family. Ov-serpin subfamily. In terms of assembly, forms a complex with the monomeric form of beta-tryptase.

It localises to the cytoplasm. Its function is as follows. Inhibitor of cathepsin G, kallikrein-8 and thrombin. May play an important role in the inner ear in the protection against leakage of lysosomal content during stress. May be involved in the regulation of serine proteinases present in the brain or extravasated from the blood. In Pongo abelii (Sumatran orangutan), this protein is Serpin B6 (SERPINB6).